The primary structure comprises 420 residues: Tyrosine--tRNA ligase (420 aa).

An L-tyrosine-binding site is contributed by tyrosine 36. The short motif at 41–50 (PTADSLHIGH) is the 'HIGH' region element. Tyrosine 170 and glutamine 174 together coordinate L-tyrosine. The 'KMSKS' region signature appears at 231–235 (KFGKS). ATP is bound at residue lysine 234. The region spanning 353-420 (TNIVEVLIET…KKKYFMVNYQ (68 aa)) is the S4 RNA-binding domain.

It belongs to the class-I aminoacyl-tRNA synthetase family. TyrS type 1 subfamily. Homodimer.

It is found in the cytoplasm. The catalysed reaction is tRNA(Tyr) + L-tyrosine + ATP = L-tyrosyl-tRNA(Tyr) + AMP + diphosphate + H(+). Catalyzes the attachment of tyrosine to tRNA(Tyr) in a two-step reaction: tyrosine is first activated by ATP to form Tyr-AMP and then transferred to the acceptor end of tRNA(Tyr). The sequence is that of Tyrosine--tRNA ligase from Staphylococcus aureus (strain COL).